A 111-amino-acid polypeptide reads, in one-letter code: Phosphoribosyl-ATP pyrophosphatase (111 aa).

Belongs to the PRA-PH family.

It is found in the cytoplasm. It carries out the reaction 1-(5-phospho-beta-D-ribosyl)-ATP + H2O = 1-(5-phospho-beta-D-ribosyl)-5'-AMP + diphosphate + H(+). Its pathway is amino-acid biosynthesis; L-histidine biosynthesis; L-histidine from 5-phospho-alpha-D-ribose 1-diphosphate: step 2/9. The sequence is that of Phosphoribosyl-ATP pyrophosphatase from Ectopseudomonas mendocina (strain ymp) (Pseudomonas mendocina).